The following is a 436-amino-acid chain: Prenyltransferase nscD (436 aa).

It belongs to the tryptophan dimethylallyltransferase family.

It functions in the pathway secondary metabolite biosynthesis. Functionally, prenyltransferase; part of the gene cluster that mediates the biosynthesis of neosartoricin B, a prenylated anthracenone that probably exhibits T-cell antiproliferative activity, suggestive of a physiological role as an immunosuppressive agent. The non-reducing polyketide synthase nscA probably synthesizes and cyclizes the decaketide backbone. The hydrolase nscB then mediates the product release through hydrolysis followed by spontaneous decarboxylation. The prenyltransferase nscD catalyzes the addition of the dimethylallyl group to the aromatic C5. The FAD-dependent monooxygenase nscC is then responsible for the stereospecific hydroxylation at C2. Neosartoricin B can be converted into two additional compounds neosartoricins C and D. Neosartoricin C is a spirocyclic compound that is cyclized through the attack of C3 hydroxyl on C14, followed by dehydration. On the other hand, neosartoricin D is a further cyclized compound in which attack of C2 on C14 in neosartoricin C results in the formation of the acetal-containing dioxabicyclo-octanone ring. Both of these compounds are novel and possibly represent related metabolites of the gene cluster. The sequence is that of Prenyltransferase nscD from Arthroderma otae (strain ATCC MYA-4605 / CBS 113480) (Microsporum canis).